A 239-amino-acid polypeptide reads, in one-letter code: Ribonuclease PH (239 aa).

Residues Arg-87 and 125 to 127 (GTR) each bind phosphate.

Belongs to the RNase PH family. Homohexameric ring arranged as a trimer of dimers.

It catalyses the reaction tRNA(n+1) + phosphate = tRNA(n) + a ribonucleoside 5'-diphosphate. Functionally, phosphorolytic 3'-5' exoribonuclease that plays an important role in tRNA 3'-end maturation. Removes nucleotide residues following the 3'-CCA terminus of tRNAs; can also add nucleotides to the ends of RNA molecules by using nucleoside diphosphates as substrates, but this may not be physiologically important. Probably plays a role in initiation of 16S rRNA degradation (leading to ribosome degradation) during starvation. The chain is Ribonuclease PH from Cellvibrio japonicus (strain Ueda107) (Pseudomonas fluorescens subsp. cellulosa).